We begin with the raw amino-acid sequence, 612 residues long: UvrABC system protein C (612 aa).

The GIY-YIG domain maps to 21-99; sequence KLPGVYQMYD…IKSQKPPFNI (79 aa). Positions 209–244 constitute a UVR domain; that stretch reads EVLQQELQVEMEQASQALDFERAVVVRDQITDLRQV.

Belongs to the UvrC family. Interacts with UvrB in an incision complex.

The protein localises to the cytoplasm. The UvrABC repair system catalyzes the recognition and processing of DNA lesions. UvrC both incises the 5' and 3' sides of the lesion. The N-terminal half is responsible for the 3' incision and the C-terminal half is responsible for the 5' incision. This Saccharophagus degradans (strain 2-40 / ATCC 43961 / DSM 17024) protein is UvrABC system protein C.